We begin with the raw amino-acid sequence, 265 residues long: MRTLKKFSLRDLAYNAAYPFYEKRLMREIQGVRQPEHVAIMCDGNRRWAREAGFADVTHGHRVGAKKIGEMVRWCAHTDVELVTVYLLSTENLGRASDELQMLFDIIGDVVDELASPETNCRLRLVGHLDLLPDDVSRRLTQAQDSTNDNTGVFVNVAVGYGGRQEIVDAVRELIDAEAAAGTTATEMAEKISVDSISKHLYTSGQPDPDLVIRTSGEQRLSGFLLWQAAYSEIWFTDTYWPAFRRVDFLRALREYSKRSRRFGK.

Asp-43 is an active-site residue. Asp-43 contributes to the Mg(2+) binding site. Residues 44–47 (GNRR), Trp-48, His-61, and 89–91 (STE) each bind substrate. Asn-92 functions as the Proton acceptor in the catalytic mechanism. Substrate contacts are provided by residues Arg-95, Arg-214, and 220 to 222 (RLS). Residue Glu-233 coordinates Mg(2+).

This sequence belongs to the UPP synthase family. In terms of assembly, homodimer. Requires Mg(2+) as cofactor.

In terms of biological role, catalyzes the condensation of isopentenyl diphosphate (IPP) with allylic pyrophosphates generating different type of terpenoids. The sequence is that of Isoprenyl transferase 1 from Corynebacterium diphtheriae (strain ATCC 700971 / NCTC 13129 / Biotype gravis).